Here is a 1025-residue protein sequence, read N- to C-terminus: Multidrug resistance protein MdtC (1025 aa).

The next 12 membrane-spanning stretches (helical) occupy residues 3 to 23 (FFAL…AITL), 333 to 353 (EVEQ…FLFL), 360 to 380 (IIPA…MYLC), 387 to 407 (LSLM…IVVL), 431 to 451 (VGFT…PLLL), 463 to 483 (FAVT…TLTP), 528 to 548 (LVGV…ISIP), 853 to 873 (VILI…LYES), 875 to 895 (VHPL…LLAL), 897 to 917 (LFNA…IGIV), 953 to 973 (PIMM…LSGG), and 984 to 1004 (ITIV…TPVV).

Belongs to the resistance-nodulation-cell division (RND) (TC 2.A.6) family. MdtC subfamily. As to quaternary structure, part of a tripartite efflux system composed of MdtA, MdtB and MdtC. MdtC forms a heteromultimer with MdtB.

It is found in the cell inner membrane. In terms of biological role, the MdtABC tripartite complex confers resistance against novobiocin and deoxycholate. The chain is Multidrug resistance protein MdtC from Escherichia fergusonii (strain ATCC 35469 / DSM 13698 / CCUG 18766 / IAM 14443 / JCM 21226 / LMG 7866 / NBRC 102419 / NCTC 12128 / CDC 0568-73).